We begin with the raw amino-acid sequence, 365 residues long: 3-dehydroquinate synthase (365 aa).

NAD(+) contacts are provided by residues 106–110 (GVIGD), 130–131 (TT), Lys-142, Lys-151, and 169–172 (FFAT). Residues Glu-184, His-247, and His-264 each coordinate Zn(2+).

Belongs to the sugar phosphate cyclases superfamily. Dehydroquinate synthase family. NAD(+) is required as a cofactor. Co(2+) serves as cofactor. Requires Zn(2+) as cofactor.

Its subcellular location is the cytoplasm. The enzyme catalyses 7-phospho-2-dehydro-3-deoxy-D-arabino-heptonate = 3-dehydroquinate + phosphate. It functions in the pathway metabolic intermediate biosynthesis; chorismate biosynthesis; chorismate from D-erythrose 4-phosphate and phosphoenolpyruvate: step 2/7. In terms of biological role, catalyzes the conversion of 3-deoxy-D-arabino-heptulosonate 7-phosphate (DAHP) to dehydroquinate (DHQ). This Listeria monocytogenes serovar 1/2a (strain ATCC BAA-679 / EGD-e) protein is 3-dehydroquinate synthase.